The primary structure comprises 302 residues: Elongation factor Ts (302 aa).

The tract at residues 80-83 (TDFV) is involved in Mg(2+) ion dislocation from EF-Tu.

This sequence belongs to the EF-Ts family.

It localises to the cytoplasm. In terms of biological role, associates with the EF-Tu.GDP complex and induces the exchange of GDP to GTP. It remains bound to the aminoacyl-tRNA.EF-Tu.GTP complex up to the GTP hydrolysis stage on the ribosome. The sequence is that of Elongation factor Ts from Methylibium petroleiphilum (strain ATCC BAA-1232 / LMG 22953 / PM1).